The primary structure comprises 273 residues: Ribosomal RNA small subunit methyltransferase A (273 aa).

S-adenosyl-L-methionine contacts are provided by Asn-18, Leu-20, Gly-45, Glu-66, Asp-91, and Asn-113.

It belongs to the class I-like SAM-binding methyltransferase superfamily. rRNA adenine N(6)-methyltransferase family. RsmA subfamily.

Its subcellular location is the cytoplasm. It catalyses the reaction adenosine(1518)/adenosine(1519) in 16S rRNA + 4 S-adenosyl-L-methionine = N(6)-dimethyladenosine(1518)/N(6)-dimethyladenosine(1519) in 16S rRNA + 4 S-adenosyl-L-homocysteine + 4 H(+). Its function is as follows. Specifically dimethylates two adjacent adenosines (A1518 and A1519) in the loop of a conserved hairpin near the 3'-end of 16S rRNA in the 30S particle. May play a critical role in biogenesis of 30S subunits. The polypeptide is Ribosomal RNA small subunit methyltransferase A (Escherichia coli O1:K1 / APEC).